A 215-amino-acid chain; its full sequence is Large ribosomal subunit protein uL16 (215 aa).

It belongs to the universal ribosomal protein uL16 family. In terms of assembly, component of the small ribosomal subunit. Mature ribosomes consist of a small (40S) and a large (60S) subunit. The 40S subunit contains about 33 different proteins and 1 molecule of RNA (18S). The 60S subunit contains about 49 different proteins and 3 molecules of RNA (25S, 5.8S and 5S).

This is Large ribosomal subunit protein uL16 (RPL10) from Euglena gracilis.